The following is a 638-amino-acid chain: Polypeptide N-acetylgalactosaminyltransferase 15 (638 aa).

Residues 1–12 (MLPRKRPRSGRS) lie on the Cytoplasmic side of the membrane. Residues 13-35 (RLQFLLLFLTLGCVLMMVILLHP) traverse the membrane as a helical; Signal-anchor for type II membrane protein segment. Residues 36–638 (PPPTLHQAVT…FDQIHPVDER (603 aa)) are Lumenal-facing. The disordered stretch occupies residues 134 to 157 (KDWRTEEDGEESEEVLTPLGPDSD). Disulfide bonds link Cys181-Cys411, Cys402-Cys481, Cys516-Cys535, Cys561-Cys574, and Cys602-Cys619. Residues 190 to 299 (LPTASVILCF…PGWLEPLLSR (110 aa)) are catalytic subdomain A. Substrate-binding residues include Asp231 and Arg260. The Mn(2+) site is built by Asp283, His285, and His416. Residues 357–419 (PVRSPVVPRE…PCSRVGHIYR (63 aa)) form a catalytic subdomain B region. Residue Arg419 participates in substrate binding. The Ricin B-type lectin domain maps to 503 to 630 (RFSGKLHNTG…GKTSQLWRFD (128 aa)). Asn573 is a glycosylation site (N-linked (GlcNAc...) asparagine).

Belongs to the glycosyltransferase 2 family. GalNAc-T subfamily. Mn(2+) serves as cofactor. Specifically expressed in testis.

Its subcellular location is the golgi apparatus membrane. It catalyses the reaction L-seryl-[protein] + UDP-N-acetyl-alpha-D-galactosamine = a 3-O-[N-acetyl-alpha-D-galactosaminyl]-L-seryl-[protein] + UDP + H(+). The enzyme catalyses L-threonyl-[protein] + UDP-N-acetyl-alpha-D-galactosamine = a 3-O-[N-acetyl-alpha-D-galactosaminyl]-L-threonyl-[protein] + UDP + H(+). The protein operates within protein modification; protein glycosylation. Functionally, catalyzes the initial reaction in O-linked oligosaccharide biosynthesis, the transfer of an N-acetyl-D-galactosamine residue to a serine or threonine residue on the protein receptor. Although it displays a much weaker activity toward all substrates tested compared to GALNT2, it is able to transfer up to seven GalNAc residues to the Muc5AC peptide, suggesting that it can fill vicinal Thr/Ser residues in cooperation with other GALNT proteins. Prefers Muc1a as substrate. This chain is Polypeptide N-acetylgalactosaminyltransferase 15 (Galnt15), found in Mus musculus (Mouse).